A 245-amino-acid chain; its full sequence is Thiopurine S-methyltransferase (245 aa).

29–40 (WQDKWVSHKIGF) is an S-adenosyl-L-methionine binding site. Phe40 serves as a coordination point for substrate. Position 58 is an N6-acetyllysine (Lys58). Residues Leu69, Glu90, 134 to 135 (SI), and Arg152 contribute to the S-adenosyl-L-methionine site.

Belongs to the class I-like SAM-binding methyltransferase superfamily. TPMT family. Monomer.

It is found in the cytoplasm. The enzyme catalyses S-adenosyl-L-methionine + a thiopurine = S-adenosyl-L-homocysteine + a thiopurine S-methylether.. In Oryctolagus cuniculus (Rabbit), this protein is Thiopurine S-methyltransferase (TPMT).